Here is a 55-residue protein sequence, read N- to C-terminus: Rubredoxin-1 (55 aa).

The Rubredoxin-like domain maps to 1–54 (MKKWQCVVCGLIYDEAKGWPEEGIEAGTRWEDVPEDWLCPDCGVGKLDFEMIEI). Fe cation is bound by residues Cys6, Cys9, Cys39, and Cys42.

This sequence belongs to the rubredoxin family. The cofactor is Fe(3+).

It is found in the cytoplasm. It participates in hydrocarbon metabolism; alkane degradation. Its function is as follows. Involved in the hydrocarbon hydroxylating system, which transfers electrons from NADH to rubredoxin reductase and then through rubredoxin to alkane 1 monooxygenase. The sequence is that of Rubredoxin-1 (rubA1) from Pseudomonas aeruginosa (strain ATCC 15692 / DSM 22644 / CIP 104116 / JCM 14847 / LMG 12228 / 1C / PRS 101 / PAO1).